The following is a 442-amino-acid chain: Proline--tRNA ligase (442 aa).

The protein belongs to the class-II aminoacyl-tRNA synthetase family. ProS type 2 subfamily. As to quaternary structure, homodimer.

It is found in the cytoplasm. It catalyses the reaction tRNA(Pro) + L-proline + ATP = L-prolyl-tRNA(Pro) + AMP + diphosphate. In terms of biological role, catalyzes the attachment of proline to tRNA(Pro) in a two-step reaction: proline is first activated by ATP to form Pro-AMP and then transferred to the acceptor end of tRNA(Pro). The sequence is that of Proline--tRNA ligase from Brucella ovis (strain ATCC 25840 / 63/290 / NCTC 10512).